The primary structure comprises 123 residues: uncharacterized protein (123 aa).

The signal sequence occupies residues 1–20 (MSPLIVGTLIIILLSGLATA). G96 carries GPI-anchor amidated glycine lipidation. Positions 97–123 (SSPTTKRVIYIVMILLVLITLAVNLKH) are cleaved as a propeptide — removed in mature form.

It localises to the cell membrane. This is an uncharacterized protein from Schizosaccharomyces pombe (strain 972 / ATCC 24843) (Fission yeast).